Consider the following 161-residue polypeptide: MPSFDVVSEANMIEVKNAIEQSNKEISTRFDFKGSDARVEQKERELTLFADDDFKLGQVKDVLIGKLAKRNVDVRFLDYGKVEKIGGDKVKQIVTVKKGVTGDLAKKIVRLVKDSKIKVQASIQGDAVRISGTKRDDLQSTIAMLRKDVTDTPLDFNNFRD.

It belongs to the YajQ family.

Functionally, nucleotide-binding protein. This chain is Nucleotide-binding protein BceJ2315_27070, found in Burkholderia cenocepacia (strain ATCC BAA-245 / DSM 16553 / LMG 16656 / NCTC 13227 / J2315 / CF5610) (Burkholderia cepacia (strain J2315)).